The primary structure comprises 99 residues: Ferredoxin, heterocyst (99 aa).

The 2Fe-2S ferredoxin-type domain occupies 4 to 96 (YQVRLINKKQ…NCTIKTHQEP (93 aa)). Residues Cys-42, Cys-47, Cys-50, and Cys-80 each coordinate [2Fe-2S] cluster.

This sequence belongs to the 2Fe2S plant-type ferredoxin family. The cofactor is [2Fe-2S] cluster.

Its function is as follows. Ferredoxins are iron-sulfur proteins that transfer electrons in a wide variety of metabolic reactions. Donates electrons to the nitrogenase. The chain is Ferredoxin, heterocyst (fdxH) from Nostoc sp. (strain PCC 7120 / SAG 25.82 / UTEX 2576).